Here is a 413-residue protein sequence, read N- to C-terminus: Coiled-coil domain-containing protein 83 (413 aa).

2 coiled-coil regions span residues 32–186 and 215–255; these read HCQI…RIIR and IWEN…QLFN.

This is Coiled-coil domain-containing protein 83 (CCDC83) from Bos taurus (Bovine).